The sequence spans 169 residues: Fumarase E (169 aa).

Belongs to the MtlR/FumE family.

It catalyses the reaction (S)-malate = fumarate + H2O. Its function is as follows. In vitro catalyzes the addition of water to fumarate, forming malate. Cannot catalyze the reverse reaction. Cannot use the cis-isomer maleate as substrate. The chain is Fumarase E from Escherichia coli (strain K12).